We begin with the raw amino-acid sequence, 293 residues long: Protein transport protein yif1 (293 aa).

The Cytoplasmic segment spans residues 1–139; that stretch reads MPPKLYHPQP…PPAEDLNSPD (139 aa). The helical transmembrane segment at 140–160 threads the bilayer; it reads MYIPLMAFTTHILLLCALAGL. At 161–175 the chain is on the lumenal side; that stretch reads QDDFQPELFGLRASK. A helical membrane pass occupies residues 176–196; the sequence is ACAVVLVEFLATRLGCYLLNI. At 197 to 201 the chain is on the cytoplasmic side; it reads SSQSQ. The chain crosses the membrane as a helical span at residues 202–222; that stretch reads VLDLLAFSGYKFVGLILTSLS. Residues 223 to 226 are Lumenal-facing; the sequence is KLFE. Residues 227-247 form a helical membrane-spanning segment; it reads MPWVTRFVFLYMYLATAFFLL. Residues 248–271 lie on the Cytoplasmic side of the membrane; the sequence is RSLKYAVLPESTMAINATITSHQR. Residues 272–292 form a helical membrane-spanning segment; it reads SRRIYFLFFIAASQILFMYVL. S293 is a topological domain (lumenal).

It belongs to the YIF1 family. In terms of assembly, component of the yip1-yif1 complex, composed of at least yif1, yip1 and yos1. The complex interacts with the ER to Golgi SNAREs bos1 and sec22.

It localises to the endoplasmic reticulum membrane. The protein localises to the golgi apparatus membrane. It is found in the cytoplasmic vesicle. The protein resides in the COPII-coated vesicle. Functionally, required for fusion of ER-derived vesicles with the Golgi during ER-to-Golgi protein transport. May be involved in proper membrane localization of Rab GTPases. The protein is Protein transport protein yif1 of Schizosaccharomyces pombe (strain 972 / ATCC 24843) (Fission yeast).